We begin with the raw amino-acid sequence, 72 residues long: MKAWLICLLVICAAVIAEPVESRNYIEYGAINKCAGPNPPPGCNPPGAEQKNPTPVNEYSRGCSKIHRCRRD.

An N-terminal signal peptide occupies residues Met1–Ala17. Disulfide bonds link Cys34–Cys43 and Cys63–Cys69.

The protein belongs to the plant rapid alkalinization factor (RALF) family.

It is found in the secreted. Functionally, cell signaling peptide that may regulate plant stress, growth, and development. Mediates a rapid alkalinization of extracellular space by mediating a transient increase in the cytoplasmic Ca(2+) concentration leading to a calcium-dependent signaling events through a cell surface receptor and a concomitant activation of some intracellular mitogen-activated protein kinases. The chain is Protein RALF-like 11 (RALFL11) from Arabidopsis thaliana (Mouse-ear cress).